A 396-amino-acid chain; its full sequence is Elongation factor Tu (396 aa).

One can recognise a tr-type G domain in the interval 10–206; sequence KPHVNVGTIG…ALDTYIPTPE (197 aa). The interval 19 to 26 is G1; the sequence is GHVDHGKT. 19–26 serves as a coordination point for GTP; sequence GHVDHGKT. Position 26 (Thr-26) interacts with Mg(2+). The interval 60–64 is G2; sequence GITIN. The interval 81-84 is G3; sequence DCPG. Residues 81–85 and 136–139 contribute to the GTP site; these read DCPGH and NKCD. Residues 136-139 are G4; sequence NKCD. Residues 174–176 are G5; sequence SAK.

This sequence belongs to the TRAFAC class translation factor GTPase superfamily. Classic translation factor GTPase family. EF-Tu/EF-1A subfamily. As to quaternary structure, monomer.

Its subcellular location is the cytoplasm. It catalyses the reaction GTP + H2O = GDP + phosphate + H(+). GTP hydrolase that promotes the GTP-dependent binding of aminoacyl-tRNA to the A-site of ribosomes during protein biosynthesis. The protein is Elongation factor Tu of Burkholderia cenocepacia (strain HI2424).